The following is a 222-amino-acid chain: 3-demethoxyubiquinol 3-hydroxylase (222 aa).

Residues Glu-71, Glu-101, His-104, Glu-153, Glu-185, and His-188 each contribute to the Fe cation site.

Belongs to the COQ7 family. Fe cation is required as a cofactor.

The protein resides in the cell membrane. The catalysed reaction is a 5-methoxy-2-methyl-3-(all-trans-polyprenyl)benzene-1,4-diol + AH2 + O2 = a 3-demethylubiquinol + A + H2O. Its pathway is cofactor biosynthesis; ubiquinone biosynthesis. Its function is as follows. Catalyzes the hydroxylation of 2-nonaprenyl-3-methyl-6-methoxy-1,4-benzoquinol during ubiquinone biosynthesis. The polypeptide is 3-demethoxyubiquinol 3-hydroxylase (Bordetella bronchiseptica (strain ATCC BAA-588 / NCTC 13252 / RB50) (Alcaligenes bronchisepticus)).